Consider the following 185-residue polypeptide: Ribonuclease M5 (185 aa).

The 84-residue stretch at 4-87 folds into the Toprim domain; sequence KEIIVVEGKD…AFLPKEEALA (84 aa). Glu-10, Asp-56, and Asp-58 together coordinate Mg(2+).

This sequence belongs to the ribonuclease M5 family. The cofactor is Mg(2+).

The protein localises to the cytoplasm. It carries out the reaction Endonucleolytic cleavage of RNA, removing 21 and 42 nucleotides, respectively, from the 5'- and 3'-termini of a 5S-rRNA precursor.. In terms of biological role, required for correct processing of both the 5' and 3' ends of 5S rRNA precursor. Cleaves both sides of a double-stranded region yielding mature 5S rRNA in one step. The protein is Ribonuclease M5 of Bacillus anthracis.